Consider the following 103-residue polypeptide: MQNQQIRIRLKAFDHRLIDQSTQEIVETAKRTGAQVRGPIPLPTRKERFTVLVSPHVNKDARDQYEIRTHKRVLDIVQPTEKTVDALMKLDLAAGVEVQISLG.

Belongs to the universal ribosomal protein uS10 family. In terms of assembly, part of the 30S ribosomal subunit.

Involved in the binding of tRNA to the ribosomes. In Pseudomonas savastanoi pv. phaseolicola (strain 1448A / Race 6) (Pseudomonas syringae pv. phaseolicola (strain 1448A / Race 6)), this protein is Small ribosomal subunit protein uS10.